The primary structure comprises 475 residues: Ribulose bisphosphate carboxylase large chain (475 aa).

The propeptide occupies 1–2 (MS). N-acetylproline is present on Pro-3. The residue at position 14 (Lys-14) is an N6,N6,N6-trimethyllysine. 2 residues coordinate substrate: Asn-123 and Thr-173. The active-site Proton acceptor is the Lys-175. A substrate-binding site is contributed by Lys-177. Residues Lys-201, Asp-203, and Glu-204 each contribute to the Mg(2+) site. N6-carboxylysine is present on Lys-201. Catalysis depends on His-294, which acts as the Proton acceptor. The substrate site is built by Arg-295, His-327, and Ser-379.

Belongs to the RuBisCO large chain family. Type I subfamily. In terms of assembly, heterohexadecamer of 8 large chains and 8 small chains; disulfide-linked. The disulfide link is formed within the large subunit homodimers. It depends on Mg(2+) as a cofactor. The disulfide bond which can form in the large chain dimeric partners within the hexadecamer appears to be associated with oxidative stress and protein turnover.

It localises to the plastid. Its subcellular location is the chloroplast. It catalyses the reaction 2 (2R)-3-phosphoglycerate + 2 H(+) = D-ribulose 1,5-bisphosphate + CO2 + H2O. The catalysed reaction is D-ribulose 1,5-bisphosphate + O2 = 2-phosphoglycolate + (2R)-3-phosphoglycerate + 2 H(+). Functionally, ruBisCO catalyzes two reactions: the carboxylation of D-ribulose 1,5-bisphosphate, the primary event in carbon dioxide fixation, as well as the oxidative fragmentation of the pentose substrate in the photorespiration process. Both reactions occur simultaneously and in competition at the same active site. In Zygnema circumcarinatum (Green alga), this protein is Ribulose bisphosphate carboxylase large chain.